The following is a 351-amino-acid chain: Histidine protein kinase SaeS (351 aa).

2 helical membrane passes run 9–29 and 40–60; these read IIIGVVSSILLTSTILAIAYI and TLTLTTIITSCLTLLICSIFI. Residues 61–114 form the HAMP domain; it reads NPLIQKIKQFNIKTKQFANGNYASNDKTFNSPKEIYELNQSFNKMASEITQQMN. Positions 129–348 constitute a Histidine kinase domain; that stretch reads NLAHDLKTPL…TMTVTLHKLD (220 aa). H132 is modified (phosphohistidine; by autocatalysis).

Post-translationally, autophosphorylated.

It localises to the cell membrane. The enzyme catalyses ATP + protein L-histidine = ADP + protein N-phospho-L-histidine.. Its function is as follows. Member of the two-component regulatory system SaeR/SaeS involved in the regulation of staphylococcal virulence factors in a strain-dependent fashion. Probably functions as a membrane-associated protein kinase that upon sensing the appropriate signal, autophosphorylates and in turn activates the cytosolic response regulator SaeR. The polypeptide is Histidine protein kinase SaeS (saeS) (Staphylococcus aureus (strain USA300)).